The following is a 75-amino-acid chain: U6-lycotoxin-Ls1a (75 aa).

An N-terminal signal peptide occupies residues 1–21 (MKLLLFTALVLVVISLIEVEA). A propeptide spanning residues 22–25 (ENER) is cleaved from the precursor.

Belongs to the neurotoxin 19 (CSTX) family. 06 (U6-Lctx) subfamily. Post-translationally, contains 4 disulfide bonds. Expressed by the venom gland.

The protein resides in the secreted. The sequence is that of U6-lycotoxin-Ls1a from Lycosa singoriensis (Wolf spider).